Here is a 516-residue protein sequence, read N- to C-terminus: Histone H4 transcription factor (516 aa).

3 consecutive C2H2-type zinc fingers follow at residues 15–39 (LQCE…VTQH), 127–151 (FLCL…VEAH), and 167–191 (VLCG…LRSH). The segment at 197–219 (VACPTCGGMFANNTKFLDHIRRQ) adopts a C2H2-type 4; degenerate zinc-finger fold. 5 C2H2-type zinc fingers span residues 227–249 (FQCS…MRNH), 253–276 (YKCP…RFRH), 282–304 (FKCD…LDTH), 310–335 (YSCD…RKVH), and 343–366 (YRCH…RKKH). Residues 371-516 (PSGHPRFRYK…AAEEPEVQMV (146 aa)) are interaction with NPAT. Residues 372-405 (SGHPRFRYKEHEDGYMRLQLVRYESVELTQQLLR) are required for activation of histone H4 transcription and contributes to DNA-binding. 2 disordered regions span residues 429-456 (TVPG…PASQ) and 486-516 (PGEP…VQMV). The segment covering 436-445 (PQEEAEEEGG) has biased composition (acidic residues).

Binds MBD2 and a histone deacetylase complex. Interacts with NPAT. Post-translationally, ubiquitinated. Ubiquitination may lead to proteasome-mediated degradation.

It is found in the nucleus. Transcriptional repressor that binds to the consensus sequence 5'-CGGACGTT-3' and to the RB1 promoter. Transcriptional activator that promotes histone H4 gene transcription at the G1/S phase transition in conjunction with NPAT. Also activates transcription of the ATM and PRKDC genes. Autoregulates its expression by associating with its own promoter. The polypeptide is Histone H4 transcription factor (HINFP) (Bos taurus (Bovine)).